The following is a 288-amino-acid chain: Sulfur carrier protein FdhD (288 aa).

The tract at residues 1-23 (MMRCMQSPEVHPAAAGDAEPPTH) is disordered. Cys127 serves as the catalytic Cysteine persulfide intermediate.

The protein belongs to the FdhD family.

It is found in the cytoplasm. Required for formate dehydrogenase (FDH) activity. Acts as a sulfur carrier protein that transfers sulfur from IscS to the molybdenum cofactor prior to its insertion into FDH. This Cupriavidus necator (strain ATCC 17699 / DSM 428 / KCTC 22496 / NCIMB 10442 / H16 / Stanier 337) (Ralstonia eutropha) protein is Sulfur carrier protein FdhD.